The chain runs to 882 residues: Kelch repeat-containing protein 2 (882 aa).

The tract at residues 41 to 60 is disordered; that stretch reads TPTLPPNQHRGISGASTALP. Kelch repeat units lie at residues 99-143, 153-207, 213-267, 268-317, 319-369, and 371-417; these read RIFV…PPRV, AYVV…IIAS, KLYL…AYDN, KLWV…VYKH, MCVL…LMKN, and KLLI…LCPG. Residue Thr-455 is modified to Phosphothreonine. The span at 480–496 shows a compositional bias: basic and acidic residues; the sequence is LDDKAFERKSDREEKKP. The segment at 480–516 is disordered; the sequence is LDDKAFERKSDREEKKPQSSKVDSSINKESPGTGIKV. The segment covering 498–509 has biased composition (polar residues); it reads SSKVDSSINKES. The residue at position 509 (Ser-509) is a Phosphoserine. Coiled-coil stretches lie at residues 550-685 and 728-881; these read KNLF…QKIT and NKIE…LEQK.

As to quaternary structure, interacts with KEL1.

The chain is Kelch repeat-containing protein 2 (KEL2) from Saccharomyces cerevisiae (strain ATCC 204508 / S288c) (Baker's yeast).